A 55-amino-acid chain; its full sequence is Preprotein translocase subunit SecG (55 aa).

The Cytoplasmic portion of the chain corresponds to 1–31 (MPKNNTNENFQSGAGLIRYFNEEEIKGPALD). Residues 32-51 (PKLIIYIGIAMAVIVELAKI) traverse the membrane as a helical segment. Over 52–55 (FWPV) the chain is Extracellular.

The protein belongs to the SEC61-beta family. In terms of assembly, component of the protein translocase complex. Heterotrimer consisting of alpha (SecY), beta (SecG) and gamma (SecE) subunits. Can form oligomers of the heterotrimer.

Its subcellular location is the cell membrane. Involved in protein export. The function of the beta subunit is unknown, but it may be involved in stabilization of the trimeric complex. The chain is Preprotein translocase subunit SecG from Picrophilus torridus (strain ATCC 700027 / DSM 9790 / JCM 10055 / NBRC 100828 / KAW 2/3).